The following is a 226-amino-acid chain: Ribonuclease 3 (226 aa).

The RNase III domain occupies 7 to 129; the sequence is LARLSRTLGY…IIGAVYLDAN (123 aa). E42 is a Mg(2+) binding site. D46 is an active-site residue. 2 residues coordinate Mg(2+): D115 and E118. Residue E118 is part of the active site. Residues 156–226 enclose the DRBM domain; the sequence is DPKTILQEYL…AAQILELINK (71 aa).

Belongs to the ribonuclease III family. Homodimer. It depends on Mg(2+) as a cofactor.

It is found in the cytoplasm. The catalysed reaction is Endonucleolytic cleavage to 5'-phosphomonoester.. Its function is as follows. Digests double-stranded RNA. Involved in the processing of primary rRNA transcript to yield the immediate precursors to the large and small rRNAs (23S and 16S). Processes some mRNAs, and tRNAs when they are encoded in the rRNA operon. Processes pre-crRNA and tracrRNA of type II CRISPR loci if present in the organism. In Shewanella denitrificans (strain OS217 / ATCC BAA-1090 / DSM 15013), this protein is Ribonuclease 3.